The sequence spans 184 residues: Ubiquitin-conjugating enzyme E2-23 kDa (184 aa).

In terms of domain architecture, UBC core spans 1–148 (MSSPSKRREM…VKEYCERYAK (148 aa)). Residue cysteine 85 is the Glycyl thioester intermediate of the active site. The interval 146–184 (YAKPEDISPEEEEEESDEELSDAEGYDSGDEAIMGHADP) is disordered. Residues 152–175 (ISPEEEEEESDEELSDAEGYDSGD) show a composition bias toward acidic residues.

It belongs to the ubiquitin-conjugating enzyme family.

It catalyses the reaction S-ubiquitinyl-[E1 ubiquitin-activating enzyme]-L-cysteine + [E2 ubiquitin-conjugating enzyme]-L-cysteine = [E1 ubiquitin-activating enzyme]-L-cysteine + S-ubiquitinyl-[E2 ubiquitin-conjugating enzyme]-L-cysteine.. It functions in the pathway protein modification; protein ubiquitination. Catalyzes the covalent attachment of ubiquitin to other proteins. This Triticum aestivum (Wheat) protein is Ubiquitin-conjugating enzyme E2-23 kDa (UBC4).